Reading from the N-terminus, the 697-residue chain is MCCAVCGPEPGRIGEVTPLGPCPAQHRGGPLRPSELAQASVMAALCAVTAIISVVVPFAAGLALLGTVPTGLLAYRYRLRVLAAATVAAGMIAFLIAGLGGFMGVVHSAYIGGLTGIVKRRGRGTPTVVVSSLIGGFVFGAAMVGMLAAMVRLRHLIFKVMTANVDGIAATLARMHMQGAAADVKRYFAEGLQYWPWVLLGYFNIGIMIVSLIGWWALSRLLERMRGIPDVHKLDPPPGDDVDALIGPVPVRLDKVRFRYPRAGQDALREVSLDVRAGEHLAIIGANGSGKTTLMLILAGRAPTSGTVDRPGTVGLGKLGGTAVVLQHPESQVLGTRVADDVVWGLPLGTTADVGRLLSEVGLEALAERDTGSLSGGELQRLALAAALAREPAMLIADEVTTMVDQQGRDALLAVLSGLTQRHRTALVHITHYDNEADSADRTLSLSDSPDNTDMVHTAAMPAPVIGVDQPQHAPALELVGVGHEYASGTPWAKTALRDINFVVEQGDGVLIHGGNGSGKSTLAWIMAGLTIPTTGACLLDGRPTHEQVGAVALSFQAARLQLMRSRVDLEVASAAGFSASEQDRVAAALTVVGLDPALGARRIDQLSGGQMRRVVLAGLLARAPRALILDEPLAGLDAASQRGLLRLLEDLRRARGLTVVVVSHDFAGMEELCPRTLHLRDGVLESAAASEAGGMS.

5 helical membrane-spanning segments follow: residues L45–L65, T86–V106, V128–A148, V198–L218, and H280–G300. ABC transporter domains are found at residues V251–H473 and L477–M696. Residues G285–T292 and G514–S521 contribute to the ATP site. Residues T522–G542 traverse the membrane as a helical segment.

Belongs to the ABC transporter superfamily.

It is found in the cell membrane. This is an uncharacterized protein from Mycobacterium tuberculosis (strain CDC 1551 / Oshkosh).